We begin with the raw amino-acid sequence, 552 residues long: T-box transcription factor TBX4 (552 aa).

Residues 1–14 (MLQDKGLSESEEAF) are compositionally biased toward basic and acidic residues. The interval 1-50 (MLQDKGLSESEEAFRAPGPALGEASNTSTTNAPEPALATPGLSGAALSSP) is disordered. The T-box DNA-binding region spans 76 to 256 (LHEKELWKKF…NNPFAKGFRG (181 aa)). Phosphoserine is present on serine 514.

The protein localises to the nucleus. Functionally, transcriptional regulator that has an essential role in the organogenesis of lungs, pelvis, and hindlimbs. This chain is T-box transcription factor TBX4 (Tbx4), found in Mus musculus (Mouse).